An 846-amino-acid chain; its full sequence is Cap-specific mRNA (nucleoside-2'-O-)-methyltransferase 1 (846 aa).

The disordered stretch occupies residues 1-81; the sequence is MKRKSDSEQQ…LPDTLAEGSS (81 aa). Positions 2–20 match the Bipartite nuclear localization signal motif; it reads KRKSDSEQQPSVQCRKKKR. Residues 27-45 are compositionally biased toward polar residues; sequence NLSSTSDDDTQYSNHGTQE. One can recognise a G-patch domain in the interval 87–133; the sequence is YNSVSQKLMAKMGFREGEGLGKFGQGRKEIVETSKQKGRRGLGMVLK. Substrate is bound by residues 203–207 and Arg218; that span reads KSAFD. The 220-residue stretch at 231–450 folds into the RrmJ-type SAM-dependent 2'-O-MTase domain; the sequence is FFLNRAAMKM…ERYVVCRGLK (220 aa). An S-adenosyl-L-methionine-binding site is contributed by Asn234. Lys239 is an active-site residue. Residues 277-283 and 335-336 each bind S-adenosyl-L-methionine; these read CAGPGGF and DV. Asp364 is a catalytic residue. 374–376 is a substrate binding site; the sequence is NIQ. Catalysis depends on Lys404, which acts as the Proton acceptor. A substrate-binding site is contributed by Asn439. Residues 752 to 786 form the WW domain; it reads KTINEPWSMAYSKSQKRKYFYNSKTKNSQFELPVE.

The protein resides in the nucleus. The enzyme catalyses a 5'-end (N(7)-methyl 5'-triphosphoguanosine)-ribonucleoside in mRNA + S-adenosyl-L-methionine = a 5'-end (N(7)-methyl 5'-triphosphoguanosine)-(2'-O-methyl-ribonucleoside) in mRNA + S-adenosyl-L-homocysteine + H(+). S-adenosyl-L-methionine-dependent methyltransferase that mediates mRNA cap1 2'-O-ribose methylation to the 5'-cap structure of mRNAs. Methylates the ribose of the first nucleotide of a m(7)GpppG-capped mRNA and small nuclear RNA (snRNA) to produce m(7)GpppRm (cap1). Displays a preference for cap0 transcripts. Cap1 modification is linked to higher levels of translation. May be involved in the interferon response pathway. This Xenopus laevis (African clawed frog) protein is Cap-specific mRNA (nucleoside-2'-O-)-methyltransferase 1 (cmtr1).